Reading from the N-terminus, the 359-residue chain is Biotin synthase (359 aa).

Residues 67-302 (CCGNRVDLCS…QQILRYAGGR (236 aa)) form the Radical SAM core domain. [4Fe-4S] cluster contacts are provided by cysteine 85, cysteine 89, and cysteine 92. [2Fe-2S] cluster contacts are provided by cysteine 130, cysteine 167, cysteine 227, and arginine 297.

Belongs to the radical SAM superfamily. Biotin synthase family. In terms of assembly, homodimer. [4Fe-4S] cluster serves as cofactor. It depends on [2Fe-2S] cluster as a cofactor.

It carries out the reaction (4R,5S)-dethiobiotin + (sulfur carrier)-SH + 2 reduced [2Fe-2S]-[ferredoxin] + 2 S-adenosyl-L-methionine = (sulfur carrier)-H + biotin + 2 5'-deoxyadenosine + 2 L-methionine + 2 oxidized [2Fe-2S]-[ferredoxin]. It functions in the pathway cofactor biosynthesis; biotin biosynthesis; biotin from 7,8-diaminononanoate: step 2/2. In terms of biological role, catalyzes the conversion of dethiobiotin (DTB) to biotin by the insertion of a sulfur atom into dethiobiotin via a radical-based mechanism. The protein is Biotin synthase of Gloeothece citriformis (strain PCC 7424) (Cyanothece sp. (strain PCC 7424)).